We begin with the raw amino-acid sequence, 544 residues long: CRISPR-associated endodeoxyribonuclease Cas12f2 (544 aa).

Positions 1 to 195 (MNMSKTTISV…KPNERETRYV (195 aa)) are recognition domain (REC). The wedge domain (WED) stretch occupies residues 196–326 (HISKLESPSK…YLQYTYEAEV (131 aa)). Positions 327–334 (EANKEYAG) are linker. The interval 335–485 (CLGVDIGCSK…VYVKPDYTSQ (151 aa)) is ruvC-I. Catalysis depends on residues aspartate 339 and glutamate 430. Positions 486 to 520 (TCSSCGADKEKTERPSQAIFRCLNPTCRYYQRDIN) are target nucleic acid-binding (TNB). 4 residues coordinate Zn(2+): cysteine 487, cysteine 490, cysteine 507, and cysteine 512. Positions 521 to 541 (ADFNAAVNIAKKALNNTEVVT) are ruvC-II. Residue aspartate 522 is part of the active site.

It belongs to the CRISPR-associated endonuclease Cas12f family. An asymmetric homodimer. Guide RNA is probably required for dimerization. The cofactor is Mg(2+). It depends on Zn(2+) as a cofactor.

Functionally, CRISPR (clustered regularly interspaced short palindromic repeat), is an adaptive immune system that provides protection against mobile genetic elements (viruses, transposable elements and conjugative plasmids). CRISPR clusters contain sequences complementary to antecedent mobile elements and target invading nucleic acids. CRISPR clusters are transcribed and processed into CRISPR RNA (crRNA), which requires a trans-encoded small RNA (tracrRNA), but not this protein (in vitro). Recognizes a short motif in the CRISPR repeat sequences (the 5' PAM or protospacer adjacent motif, TTAT in this organism) to help distinguish self versus nonself, as targets within the CRISPR locus do not have PAMs. Upon expression in E.coli of this protein, a mini CRISPR array and the probable tracrRNA, has dsDNA endonuclease activity. DNA cleavage is centered around positions 21 base pairs 3' of PAM. The mini system does not protect E.coli against transformation by foreign plasmids. The protein is CRISPR-associated endodeoxyribonuclease Cas12f2 of Micrarchaeota archaeon (strain CG1_02_47_40).